A 529-amino-acid polypeptide reads, in one-letter code: tRNA pseudouridine synthase Pus10 (529 aa).

2 residues coordinate Zn(2+): C21 and C24. The stretch at 42–89 (KELLNELQKFLETEKDELILEVMNPPPKKIRLQELEDSIDNLSQNGEG) forms a coiled coil. Phosphoserine is present on residues S79 and S84. Residues C109 and C112 each coordinate Zn(2+). The RNA binding forefinger loop stretch occupies residues 304–317 (TPWIIDGERKLESS). D344 acts as the Nucleophile in catalysis. The interval 442–457 (QKTPLRVLHRRPLAVR) is RNA binding thumb loop.

Belongs to the pseudouridine synthase Pus10 family. In terms of assembly, interacts with components of the microprocessor complex DROSHA and DGCR8. Proteolytically cleaved during TRAIL-induced cell death. Cleaved, in vitro, either by caspase-3 (CASP3) or caspase-8 (CASP8).

The protein localises to the nucleus. The protein resides in the cytoplasm. It localises to the mitochondrion. It carries out the reaction uridine(55) in tRNA = pseudouridine(55) in tRNA. The enzyme catalyses uridine(54) in tRNA = pseudouridine(54) in tRNA. Functionally, protein with different functions depending on its subcellular location: involved in miRNA processing in the nucleus and acts as a tRNA pseudouridylate synthase in the cytoplasm. In the cytoplasm, acts as a pseudouridylate synthase by catalyzing synthesis of pseudouridine(54) and pseudouridine(55) from uracil-54 and uracil-55, respectively, in the psi GC loop of a subset of tRNAs. tRNA pseudouridylate synthase activity is enhanced by the presence of 1-methyladenosine at position 53-61 of tRNAs. Does not show tRNA pseudouridylate synthase activity in the nucleus. In the nucleus, promotes primary microRNAs (pri-miRNAs) processing independently of its RNA pseudouridylate synthase activity. Binds pri-miRNAs. Modulator of TRAIL/TNFSF10-induced cell death via activation of procaspase-8 and BID cleavage. Required for the progression of the apoptotic signal through intrinsic mitochondrial cell death. In Homo sapiens (Human), this protein is tRNA pseudouridine synthase Pus10.